The following is a 370-amino-acid chain: Proline-rich protein 5-like (370 aa).

Residue serine 28 is modified to Phosphoserine. A disordered region spans residues 327–370 (PTFPPPHRQCSSEPSILDSPDEMELEDVASGSQEDSELNCASLS).

Belongs to the PROTOR family. Interacts with the mammalian target of rapamycin complex 2 (mTORC2) which contains MTOR, MLST8, PRR5, RICTOR, MAPKAP1 and DEPTOR. Interacts with RFFL. Interacts (via C-terminus) with ZFP36 (via C-terminus); this interaction may accelerate ZFP36-mediated mRNA decay during stress. Interacts with RICTOR. Post-translationally, ubiquitinated. Ubiquitination by RFFL promotes proteasomal degradation of PRR5L thereby modifying the substrate-specific activity of the mTORC2 complex. Ubiquitination by RFFL is stimulated by LPA/lysophosphatidic acid.

In terms of biological role, associates with the mTORC2 complex that regulates cellular processes including survival and organization of the cytoskeleton. Regulates the activity of the mTORC2 complex in a substrate-specific manner preventing for instance the specific phosphorylation of PKCs and thereby controlling cell migration. Plays a role in the stimulation of ZFP36-mediated mRNA decay of several ZFP36-associated mRNAs, such as TNF-alpha and GM-CSF, in response to stress. Required for ZFP36 localization to cytoplasmic stress granule (SG) and P-body (PB) in response to stress. In Rattus norvegicus (Rat), this protein is Proline-rich protein 5-like (Prr5l).